Reading from the N-terminus, the 286-residue chain is Phosphatidylglycerol--prolipoprotein diacylglyceryl transferase (286 aa).

7 consecutive transmembrane segments (helical) span residues 29–49 (IHWY…VGTY), 66–86 (LVFY…VFFY), 101–121 (VWEG…AMML), 130–150 (FLDL…LGRI), 181–201 (PSQL…LFWF), 209–229 (AAVA…VEFV), and 250–270 (LSLP…RHPA). Residue Arg149 coordinates a 1,2-diacyl-sn-glycero-3-phospho-(1'-sn-glycerol).

Belongs to the Lgt family.

It is found in the cell inner membrane. The catalysed reaction is L-cysteinyl-[prolipoprotein] + a 1,2-diacyl-sn-glycero-3-phospho-(1'-sn-glycerol) = an S-1,2-diacyl-sn-glyceryl-L-cysteinyl-[prolipoprotein] + sn-glycerol 1-phosphate + H(+). It participates in protein modification; lipoprotein biosynthesis (diacylglyceryl transfer). Catalyzes the transfer of the diacylglyceryl group from phosphatidylglycerol to the sulfhydryl group of the N-terminal cysteine of a prolipoprotein, the first step in the formation of mature lipoproteins. This is Phosphatidylglycerol--prolipoprotein diacylglyceryl transferase from Teredinibacter turnerae (strain ATCC 39867 / T7901).